Here is a 133-residue protein sequence, read N- to C-terminus: MAQPLDFLLVSICLFHSLFSFQVEDYYAPTIESLIRNPETEDGACVFPFLYRSEIFYDCVNFNLKHKWCSLNKTYQGYWKYCALSDYAPCAFPFWYRHMIYWDCTEDGEVFGKKWCSLTPNYNKDQVWKYCIE.

Positions 1 to 20 (MAQPLDFLLVSICLFHSLFS) are cleaved as a signal peptide. 2 consecutive Fibronectin type-II domains span residues 40 to 84 (TEDG…YCAL) and 85 to 133 (SDYA…YCIE). Intrachain disulfides connect cysteine 45–cysteine 69, cysteine 59–cysteine 82, cysteine 90–cysteine 116, and cysteine 104–cysteine 131. Asparagine 72 carries an N-linked (GlcNAc...) asparagine glycan.

This sequence belongs to the seminal plasma protein family. Expressed only in the epididymis.

The protein localises to the secreted. Functionally, binds sperm in vitro and promotes sperm capacitation. Specifically promotes capacitation induced by high density lipoproteins (HDLs). Also binds heparin, phospholipid liposomes, and weakly to gelatin. Does not bind chondroitin sulfate B. In Mus musculus (Mouse), this protein is Binder of sperm protein homolog 1 (Bsph1).